A 400-amino-acid polypeptide reads, in one-letter code: Probable glycosyltransferase WbjE (400 aa).

This sequence belongs to the glycosyltransferase group 1 family. Glycosyltransferase 4 subfamily.

It functions in the pathway bacterial outer membrane biogenesis; LPS O-antigen biosynthesis. This Pseudomonas aeruginosa protein is Probable glycosyltransferase WbjE (wbjE).